The sequence spans 259 residues: HTH-type transcriptional regulator Rv1719 (259 aa).

The HTH iclR-type domain maps to 13-75; that stretch reads IQVIARAAEL…GARGPYRLGP (63 aa). The H-T-H motif DNA-binding region spans 35–54; sequence QAEIGERVGMARSTVSRILN. The IclR-ED domain maps to 88-259; it reads VVTEMHPFLT…AWFNGTEDRK (172 aa).

In terms of assembly, homodimer.

Its function is as follows. Binds to the upstream region of Rv1714 and probably modulates the expression of the downstream gene(s). The polypeptide is HTH-type transcriptional regulator Rv1719 (Mycobacterium tuberculosis (strain ATCC 25618 / H37Rv)).